The following is a 147-amino-acid chain: Small nuclear ribonucleoprotein-associated protein B (147 aa).

A Sm domain is found at methionine 1–proline 84. Disordered regions lie at residues aspartate 87 to arginine 106 and alanine 128 to valine 147.

Belongs to the snRNP SmB/SmN family. In terms of assembly, belongs to the 40S cdc5-associated complex (or cwf complex), a spliceosome sub-complex reminiscent of a late-stage spliceosome composed of the U2, U5 and U6 snRNAs and at least brr2, cdc5, cwf2/prp3, cwf3/syf1, cwf4/syf3, cwf5/ecm2, spp42/cwf6, cwf7/spf27, cwf8, cwf9, cwf10, cwf11, cwf12, prp45/cwf13, cwf14, cwf15, cwf16, cwf17, cwf18, cwf19, cwf20, cwf21, cwf22, cwf23, cwf24, cwf25, cwf26, cyp7/cwf27, cwf28, cwf29/ist3, lea1, msl1, prp5/cwf1, prp10, prp12/sap130, prp17, prp22, sap61, sap62, sap114, sap145, slu7, smb1, smd1, smd3, smf1, smg1 and syf2.

It localises to the nucleus. The protein resides in the cytoplasm. Its function is as follows. Plays a role in pre-mRNA splicing as a core component of the spliceosomal U1, U2, U4 and U5 small nuclear ribonucleoproteins (snRNPs), the building blocks of the spliceosome. This chain is Small nuclear ribonucleoprotein-associated protein B (smb1), found in Schizosaccharomyces pombe (strain 972 / ATCC 24843) (Fission yeast).